The primary structure comprises 691 residues: Seven transmembrane domain-containing tyrosine-protein kinase 1 (691 aa).

At 1–33 (MDTSCVSINQCGFCTYLFNRSIPLAGEGDGAIM) the chain is on the extracellular side. The helical transmembrane segment at 34–54 (FNTMVDSMALGYIFSALYLLF) threads the bilayer. Topologically, residues 55–126 (RLQRSYTYLQ…PRIINSTYFK (72 aa)) are cytoplasmic. A helical transmembrane segment spans residues 127-144 (YTLFVSLWLAFEGLLLLF). The Extracellular portion of the chain corresponds to 145–153 (LPPNSLAYP). The helical transmembrane segment at 154–176 (AFVIIVGTGHIVTDNWVLVFLYG) threads the bilayer. Residues 177-186 (KEDDRFSARR) lie on the Cytoplasmic side of the membrane. The chain crosses the membrane as a helical span at residues 187 to 207 (SFYSCTLLYLIICCTTLASFF). At 208–227 (DDQTMCKKNDCQTFMFQDEY) the chain is on the extracellular side. Residues 228-248 (TSLAITVASLVVYTIVLGMTI) traverse the membrane as a helical segment. Topologically, residues 249–258 (KRSFLRPTGR) are cytoplasmic. A helical membrane pass occupies residues 259–279 (IWLLFLMGYNCISSVGALLNI). The Extracellular segment spans residues 280–284 (LDVDA). The helical transmembrane segment at 285 to 305 (GYCFLGIAAIIYSFSYGPLLF) threads the bilayer. At 306–691 (RTCGNDTNLL…GAEEFHYIDG (386 aa)) the chain is on the cytoplasmic side. The 272-residue stretch at 363–634 (FKFGQVIGEG…ANVPISNTYV (272 aa)) folds into the Protein kinase domain. ATP is bound by residues 369-377 (IGEGYFGEV) and K390. The active-site Proton acceptor is the D493.

Belongs to the protein kinase superfamily. TKL Tyr protein kinase family.

The protein resides in the membrane. It catalyses the reaction L-tyrosyl-[protein] + ATP = O-phospho-L-tyrosyl-[protein] + ADP + H(+). This Dictyostelium discoideum (Social amoeba) protein is Seven transmembrane domain-containing tyrosine-protein kinase 1 (7tmk1).